Here is a 266-residue protein sequence, read N- to C-terminus: Enterotoxin type C-2 (266 aa).

The N-terminal stretch at 1 to 27 (MNKSRFISCVILIFALILVLFTPNVLA) is a signal peptide. Residues Asp36, His74, Glu98, Glu107, and Asp110 each contribute to the Zn(2+) site. Cys120 and Cys137 are disulfide-bonded. Zn(2+) is bound by residues His145, Glu146, and His149.

Belongs to the staphylococcal/streptococcal toxin family. As to quaternary structure, interacts with host MHC class II molecules composed of alpha/HLA-DRA and beta/HLA-DRB1 chains. Zn(2+) is required as a cofactor.

It is found in the secreted. In terms of biological role, staphylococcal enterotoxin that activates the host immune system by binding as unprocessed molecules to major histocompatibility (MHC) complex class II and T-cell receptor (TCR) molecules. In turn, this ternary complex activates a large number of T-lymphocytes initiating a systemic release of pro-inflammatory cytokines. Also causes the intoxication staphylococcal food poisoning syndrome. The chain is Enterotoxin type C-2 (entC2) from Staphylococcus aureus.